The chain runs to 88 residues: Small ribosomal subunit protein bS20 (88 aa).

Positions 1-27 (MANIPSAKKRARQAEKRRKHNQSQRSM) are disordered. Positions 7-22 (AKKRARQAEKRRKHNQ) are enriched in basic residues.

Belongs to the bacterial ribosomal protein bS20 family.

In terms of biological role, binds directly to 16S ribosomal RNA. This Alkalilimnicola ehrlichii (strain ATCC BAA-1101 / DSM 17681 / MLHE-1) protein is Small ribosomal subunit protein bS20.